We begin with the raw amino-acid sequence, 371 residues long: 4-hydroxy-3-methylbut-2-en-1-yl diphosphate synthase (flavodoxin) (371 aa).

[4Fe-4S] cluster contacts are provided by C270, C273, C305, and E312.

Belongs to the IspG family. [4Fe-4S] cluster is required as a cofactor.

It catalyses the reaction (2E)-4-hydroxy-3-methylbut-2-enyl diphosphate + oxidized [flavodoxin] + H2O + 2 H(+) = 2-C-methyl-D-erythritol 2,4-cyclic diphosphate + reduced [flavodoxin]. The protein operates within isoprenoid biosynthesis; isopentenyl diphosphate biosynthesis via DXP pathway; isopentenyl diphosphate from 1-deoxy-D-xylulose 5-phosphate: step 5/6. Converts 2C-methyl-D-erythritol 2,4-cyclodiphosphate (ME-2,4cPP) into 1-hydroxy-2-methyl-2-(E)-butenyl 4-diphosphate. The chain is 4-hydroxy-3-methylbut-2-en-1-yl diphosphate synthase (flavodoxin) from Shewanella denitrificans (strain OS217 / ATCC BAA-1090 / DSM 15013).